A 369-amino-acid polypeptide reads, in one-letter code: UDP-3-O-acylglucosamine N-acyltransferase (369 aa).

His-252 serves as the catalytic Proton acceptor. A disordered region spans residues 348-369 (ERRQRGENNAPAQNKQDEEKSS).

This sequence belongs to the transferase hexapeptide repeat family. LpxD subfamily. As to quaternary structure, homotrimer.

The catalysed reaction is a UDP-3-O-[(3R)-3-hydroxyacyl]-alpha-D-glucosamine + a (3R)-hydroxyacyl-[ACP] = a UDP-2-N,3-O-bis[(3R)-3-hydroxyacyl]-alpha-D-glucosamine + holo-[ACP] + H(+). It functions in the pathway bacterial outer membrane biogenesis; LPS lipid A biosynthesis. Its function is as follows. Catalyzes the N-acylation of UDP-3-O-acylglucosamine using 3-hydroxyacyl-ACP as the acyl donor. Is involved in the biosynthesis of lipid A, a phosphorylated glycolipid that anchors the lipopolysaccharide to the outer membrane of the cell. This is UDP-3-O-acylglucosamine N-acyltransferase from Cupriavidus metallidurans (strain ATCC 43123 / DSM 2839 / NBRC 102507 / CH34) (Ralstonia metallidurans).